The sequence spans 94 residues: PqqA binding protein (94 aa).

It belongs to the PqqD family. As to quaternary structure, monomer. Interacts with PqqE.

Its pathway is cofactor biosynthesis; pyrroloquinoline quinone biosynthesis. Functionally, functions as a PqqA binding protein and presents PqqA to PqqE, in the pyrroloquinoline quinone (PQQ) biosynthetic pathway. The polypeptide is PqqA binding protein (Pseudomonas savastanoi pv. phaseolicola (strain 1448A / Race 6) (Pseudomonas syringae pv. phaseolicola (strain 1448A / Race 6))).